Consider the following 394-residue polypeptide: Phosphoglycerate kinase (394 aa).

Residues aspartate 21–asparagine 23, arginine 36, histidine 59–arginine 62, arginine 118, and arginine 151 contribute to the substrate site. Serine 183 carries the post-translational modification Phosphoserine. Position 201 (lysine 201) interacts with ATP. Threonine 299 carries the post-translational modification Phosphothreonine. ATP is bound by residues asparagine 316, glutamate 323, and glycine 350 to serine 353.

It belongs to the phosphoglycerate kinase family. In terms of assembly, monomer.

The protein resides in the cytoplasm. It catalyses the reaction (2R)-3-phosphoglycerate + ATP = (2R)-3-phospho-glyceroyl phosphate + ADP. It participates in carbohydrate degradation; glycolysis; pyruvate from D-glyceraldehyde 3-phosphate: step 2/5. This Geobacillus stearothermophilus (Bacillus stearothermophilus) protein is Phosphoglycerate kinase.